We begin with the raw amino-acid sequence, 203 residues long: Glycerol-3-phosphate acyltransferase (203 aa).

Transmembrane regions (helical) follow at residues 3–23 (ILLATVAAYLIGSVSFAVVVS), 51–71 (KAAILTLVGDAFKGWLAVWLV), 74–94 (FGIGGEIGVALAAIAVFLGHL), 116–136 (AVHPVLGLATALTWLIVAFFF), 140–160 (SLAALVAAVFAPIFDVFLFGT), and 164–178 (PVAWAVLAMSVLLIW).

It belongs to the PlsY family. As to quaternary structure, probably interacts with PlsX.

It is found in the cell inner membrane. It catalyses the reaction an acyl phosphate + sn-glycerol 3-phosphate = a 1-acyl-sn-glycero-3-phosphate + phosphate. It functions in the pathway lipid metabolism; phospholipid metabolism. Functionally, catalyzes the transfer of an acyl group from acyl-phosphate (acyl-PO(4)) to glycerol-3-phosphate (G3P) to form lysophosphatidic acid (LPA). This enzyme utilizes acyl-phosphate as fatty acyl donor, but not acyl-CoA or acyl-ACP. This chain is Glycerol-3-phosphate acyltransferase, found in Burkholderia pseudomallei (strain 1710b).